We begin with the raw amino-acid sequence, 878 residues long: MKHLTSAEVRQMFLDFFKEKGHAVEPSASLVPHEDPSLLWINSGVATLKKYFDGRVVPENPRIVNAQKSIRTNDIENVGKTARHHTFFEMLGNFSIGDYFKEEAITWAWEFLTSEKWIGFDPELLSVTVHPEDEEAYTLWAEKIGVPEERIIRLEGNFWDIGEGPSGPNTEIFYDRGEKYGNDPSDSELYPGGENDRYLEVWNLVFSEFNHNPDGTYTPLPKKNIDTGMGLERMVSVIQDVSTNFDTDLFMPIIEATERISGDAYGKDAVKDTAFKVIADHIRTVAFAVSDGALPSNEGRGYVLRRLLRRAVRYAKTLGISRPFMYELVPTVAGIMDAFYPEVKEKQEFIAKVIKTEEERFHETLNEGLAILSDVIKKEKEKGSGIISGKDVFKLYDTYGFPVELTEEYAEDEQMTVDHKGFEAEMEKQRERARNARQDVGSMQVQGGALRDITAESTFVGYSAVKAEAKVIELLHDGQLISEAHEGDTVQILLDKTPFYAESGGQIGDRGVLRSEQAVVTIKDVKKAPNGQHVHEGTVDSGTIQKGASVTAEVEDQMRSGVVKNHTATHLLHQALKDVLGTHVNQAGSLVTENRLRFDFSHFGQVTKEELERIEGIVNEKIWESIPVAIDLKPINEAKEMGAMALFGEKYGDIVRVVQVGDYSLELCGGCHVTNTAEIGLFKIVSESGIGAGTRRIEAVTGKGAYQEMNSQLSLLQHAADELKSNVKDVPKRIQSLQAELKEAQRENESLLSKLGNVEAGAILSKVKDIGGVKVLAEKVNAKDMNHLRTMVDDLKAKLGSAVIILGAVQNEKVNLSAGVTKDLIEKGLHAGKMVKQAAEVCGGGGGGRPDMAQAGGKHPEKLEEALASAVDWIKSVL.

Residues histidine 566, histidine 570, cysteine 668, and histidine 672 each contribute to the Zn(2+) site.

Belongs to the class-II aminoacyl-tRNA synthetase family. The cofactor is Zn(2+).

It is found in the cytoplasm. It catalyses the reaction tRNA(Ala) + L-alanine + ATP = L-alanyl-tRNA(Ala) + AMP + diphosphate. Its function is as follows. Catalyzes the attachment of alanine to tRNA(Ala) in a two-step reaction: alanine is first activated by ATP to form Ala-AMP and then transferred to the acceptor end of tRNA(Ala). Also edits incorrectly charged Ser-tRNA(Ala) and Gly-tRNA(Ala) via its editing domain. In Bacillus velezensis (strain DSM 23117 / BGSC 10A6 / LMG 26770 / FZB42) (Bacillus amyloliquefaciens subsp. plantarum), this protein is Alanine--tRNA ligase.